A 308-amino-acid chain; its full sequence is Putative S-adenosyl-L-methionine-dependent methyltransferase Mmcs_1045 (308 aa).

Residues D133 and 162-163 contribute to the S-adenosyl-L-methionine site; that span reads DL.

It belongs to the UPF0677 family.

Exhibits S-adenosyl-L-methionine-dependent methyltransferase activity. This chain is Putative S-adenosyl-L-methionine-dependent methyltransferase Mmcs_1045, found in Mycobacterium sp. (strain MCS).